A 223-amino-acid polypeptide reads, in one-letter code: Imidazoleglycerol-phosphate dehydratase (223 aa).

Belongs to the imidazoleglycerol-phosphate dehydratase family.

It carries out the reaction D-erythro-1-(imidazol-4-yl)glycerol 3-phosphate = 3-(imidazol-4-yl)-2-oxopropyl phosphate + H2O. It participates in amino-acid biosynthesis; L-histidine biosynthesis; L-histidine from 5-phospho-alpha-D-ribose 1-diphosphate: step 6/9. The chain is Imidazoleglycerol-phosphate dehydratase (HIS3) from Candida albicans (Yeast).